A 101-amino-acid polypeptide reads, in one-letter code: Protein SPIRAL1-like 3 (101 aa).

A compositionally biased stretch (gly residues) spans 1 to 22 (MGRGVSSGGGQSSLGYLFGGGE). Disordered stretches follow at residues 1 to 54 (MGRG…GIQS) and 73 to 101 (TDRPSTKVQAAPGGGSSLDYLFSGNKDGK).

The protein belongs to the SPIRAL1 family.

Functionally, acts in maintaining the cortical microtubules organization essential for anisotropic cell growth. This Oryza sativa subsp. japonica (Rice) protein is Protein SPIRAL1-like 3.